A 203-amino-acid polypeptide reads, in one-letter code: ADP-ribosylation factor-like protein 6-interacting protein 1 (203 aa).

Residues 1–41 lie on the Cytoplasmic side of the membrane; that stretch reads MAEGDNRSSNLLAAETASLEEQLQGWGEVMLMADKVLRWER. Residues 42–62 form a helical membrane-spanning segment; that stretch reads AWFPPAIMGVVSLVFLIIYYL. Residues 63–65 lie on the Lumenal side of the membrane; that stretch reads DPS. A helical transmembrane segment spans residues 66–86; it reads VLSGVSCFVMFLCLADYLVPI. The Cytoplasmic segment spans residues 87–133; sequence LAPRIFGSNKWTTEQQQRFHEICSNLVKTRRRAVGWWKRLFTLKEEK. Residues 134-175 form a helical membrane-spanning segment; that stretch reads PKMYFMTMIVSLAAVAWVGQQVHNLLLTYLIVTSLLLLPGLN. Residues 176-203 lie on the Lumenal side of the membrane; sequence QHGIISKYIGMAKREINKLLKQKEKKNE.

The protein belongs to the ARL6ip family. Homooligomer. Heterodimer with ARL6IP5. Interacts with ATL1, TMEM33 and ARL6.

The protein localises to the endomembrane system. Its subcellular location is the endoplasmic reticulum membrane. It localises to the endoplasmic reticulum. Positively regulates SLC1A1/EAAC1-mediated glutamate transport by increasing its affinity for glutamate in a PKC activity-dependent manner. Promotes the catalytic efficiency of SLC1A1/EAAC1 probably by reducing its interaction with ARL6IP5, a negative regulator of SLC1A1/EAAC1-mediated glutamate transport. Plays a role in the formation and stabilization of endoplasmic reticulum tubules. Negatively regulates apoptosis, possibly by modulating the activity of caspase-9 (CASP9). Inhibits cleavage of CASP9-dependent substrates and downstream markers of apoptosis but not CASP9 itself. May be involved in protein transport, membrane trafficking, or cell signaling during hematopoietic maturation. The polypeptide is ADP-ribosylation factor-like protein 6-interacting protein 1 (ARL6IP1) (Pongo abelii (Sumatran orangutan)).